A 244-amino-acid polypeptide reads, in one-letter code: Tegument protein UL51 (244 aa).

Cysteine 9 carries S-palmitoyl cysteine; by host lipidation. Residues 178 to 244 (GVTEAPSLGH…SRAAPCVLGQ (67 aa)) are disordered. The span at 221–244 (PRPTASPTAPRPGPSRAAPCVLGQ) shows a compositional bias: low complexity.

It belongs to the herpesviridae UL51 family. As to quaternary structure, oligomerizes. Interacts with UL7; this interaction mediates UL7 incorporation to virions. Interacts with UL14. In terms of processing, phosphorylated. Post-translationally, palmitoylation is necessary for Golgi localization.

The protein resides in the virion tegument. It localises to the host cytoplasm. It is found in the host Golgi apparatus. Plays several roles during the time course of infection, including egress of virus particles from the perinuclear space and secondary envelopment of cytoplasmic capsids that bud into specific trans-Golgi network (TGN)-derived membranes. Plays also an essential role in the maintenance of host cytoplasmic viral assembly center (cVAC) morphology in primary host neuronal cells. This Homo sapiens (Human) protein is Tegument protein UL51.